A 217-amino-acid polypeptide reads, in one-letter code: Ufm1-specific protease 1 (217 aa).

Active-site residues include cysteine 53, aspartate 175, and histidine 177.

The protein belongs to the peptidase C78 family. In terms of tissue distribution, widely expressed. Expressed at higher level in brain, heart, kidney and skeletal muscle.

The protein resides in the cytoplasm. The protein localises to the cytosol. Its function is as follows. Thiol-dependent isopeptidase that specifically mediate the processing of UFM1 precursors as well as the deconjugation of UFM1 from target proteins. Mainly responsible for the maturation of the UFM1 precursor, a prerequisite for conjugation reactions. This Mus musculus (Mouse) protein is Ufm1-specific protease 1.